Here is a 430-residue protein sequence, read N- to C-terminus: Adenylosuccinate synthetase (430 aa).

Residues 12–18 (GDEGKGK) and 40–42 (GHT) contribute to the GTP site. Asp-13 functions as the Proton acceptor in the catalytic mechanism. Residues Asp-13 and Gly-40 each contribute to the Mg(2+) site. IMP-binding positions include 13–16 (DEGK), 38–41 (NAGH), Thr-128, Arg-142, Gln-223, Thr-238, and Arg-302. Catalysis depends on His-41, which acts as the Proton donor. 298-304 (TTTGRPR) serves as a coordination point for substrate. GTP contacts are provided by residues Arg-304, 330–332 (SID), and 412–414 (SVG).

The protein belongs to the adenylosuccinate synthetase family. As to quaternary structure, homodimer. Requires Mg(2+) as cofactor.

It is found in the cytoplasm. It carries out the reaction IMP + L-aspartate + GTP = N(6)-(1,2-dicarboxyethyl)-AMP + GDP + phosphate + 2 H(+). Its pathway is purine metabolism; AMP biosynthesis via de novo pathway; AMP from IMP: step 1/2. In terms of biological role, plays an important role in the de novo pathway of purine nucleotide biosynthesis. Catalyzes the first committed step in the biosynthesis of AMP from IMP. This Streptococcus suis (strain 98HAH33) protein is Adenylosuccinate synthetase.